The following is a 20-amino-acid chain: Pregnancy-associated glycoprotein 61C (20 aa).

Belongs to the peptidase A1 family. In terms of processing, N-glycosylated. As to expression, expressed in chorionic epithelium (trophectoderm).

Its subcellular location is the secreted. It is found in the extracellular space. The polypeptide is Pregnancy-associated glycoprotein 61C (Bubalus bubalis (Domestic water buffalo)).